We begin with the raw amino-acid sequence, 149 residues long: FAD synthase (149 aa).

ATP-binding positions include 9–10 (TF), 14–17 (HPGH), Asn92, and Tyr119.

This sequence belongs to the archaeal FAD synthase family. Homodimer. The cofactor is a divalent metal cation.

The enzyme catalyses FMN + ATP + H(+) = FAD + diphosphate. Its pathway is cofactor biosynthesis; FAD biosynthesis; FAD from FMN: step 1/1. Catalyzes the transfer of the AMP portion of ATP to flavin mononucleotide (FMN) to produce flavin adenine dinucleotide (FAD) coenzyme. The chain is FAD synthase from Methanoculleus marisnigri (strain ATCC 35101 / DSM 1498 / JR1).